The chain runs to 308 residues: Probable acetylxylan esterase A (308 aa).

An N-terminal signal peptide occupies residues 1–19; that stretch reads MAPFSFLLTLLLYTLSAGA. An N-linked (GlcNAc...) asparagine glycan is attached at Asn141. The active-site Charge relay system is Ser151. N-linked (GlcNAc...) asparagine glycosylation is present at Asn193.

Belongs to the carbohydrate esterase 1 (CE1) family. AxeA subfamily. Monomer.

The protein resides in the secreted. It catalyses the reaction Deacetylation of xylans and xylo-oligosaccharides.. It participates in glycan degradation; xylan degradation. Functionally, acetylxylan esterase involved in the hydrolysis of xylan, a major structural heterogeneous polysaccharide found in plant biomass representing the second most abundant polysaccharide in the biosphere, after cellulose. Degrades acetylated xylans by cleaving acetyl side groups from the hetero-xylan backbone. This Aspergillus clavatus (strain ATCC 1007 / CBS 513.65 / DSM 816 / NCTC 3887 / NRRL 1 / QM 1276 / 107) protein is Probable acetylxylan esterase A (axeA).